Here is a 217-residue protein sequence, read N- to C-terminus: LSM12 homolog A (217 aa).

Positions 9–78 (VNAVNDCFSI…CSNVQVIKEC (70 aa)) constitute a Sm domain. The AD domain occupies 86-184 (QKLNLEQVKM…IIKQFFNTRP (99 aa)). The interval 185-217 (SPVPESGAAASTSSPSVSPTSSSLASGSPVPAN) is disordered. Residues 190–217 (SGAAASTSSPSVSPTSSSLASGSPVPAN) are compositionally biased toward low complexity.

It belongs to the LSM12 family. As to quaternary structure, component of the Atx2-tyf activator complex, composed of Atx2, tyf, pAbp, Lsm12a. Interacts with tyf, Atx2 and pAbp.

Its function is as follows. Component of the Atx2-tyf activator complex which functions in the circadian pacemaker neurons to activate the TYF-dependent translation of per and maintain 24 hour periodicity in circadian behaviors. Within the Atx2-tyf complex, likely to function as a molecular adapter which stabilizes the interaction between Atx2 and the translational regulator tyf. This is LSM12 homolog A from Drosophila melanogaster (Fruit fly).